The following is a 123-amino-acid chain: Fluoride-specific ion channel FluC (123 aa).

Helical transmembrane passes span 5 to 25 (VWVAVGGALGAIVRYFFYKFV), 33 to 53 (LATFLVNVVASFLLGFIIGAF), 62 to 82 (LKLALATGFCGALSTFSTFAA), and 94 to 114 (ITAFVYTAVSVGLGIVSVALG). Residues G72 and S75 each contribute to the Na(+) site.

It belongs to the fluoride channel Fluc/FEX (TC 1.A.43) family.

It is found in the cell inner membrane. It catalyses the reaction fluoride(in) = fluoride(out). Its activity is regulated as follows. Na(+) is not transported, but it plays an essential structural role and its presence is essential for fluoride channel function. Its function is as follows. Fluoride-specific ion channel. Important for reducing fluoride concentration in the cell, thus reducing its toxicity. This is Fluoride-specific ion channel FluC from Ignicoccus hospitalis (strain KIN4/I / DSM 18386 / JCM 14125).